A 186-amino-acid polypeptide reads, in one-letter code: MSDAFDINDLKRRMEGAVNALKHDLGGLRTGRASASLLEPITIEAYGSTMPINQVANISVPESRMLSVSVWDKSMVGAVERAIRDSGLGLNPITDGMTLRIPLPELNEQRRKELVKIAHQYAEQGRIAARHVRRDGMDQLKKLEKDSVISQDESRVLSEKVQKLTDDTIAEMDKIVAVKEGEIMQV.

Belongs to the RRF family.

The protein localises to the cytoplasm. Responsible for the release of ribosomes from messenger RNA at the termination of protein biosynthesis. May increase the efficiency of translation by recycling ribosomes from one round of translation to another. The polypeptide is Ribosome-recycling factor (Brucella abortus (strain S19)).